Consider the following 486-residue polypeptide: MITTEIKRVKNHINGEWVESTGTEVEAVPNPATGKIIAYVPLSPKEDVEKAVEAAKAAFETWSKVPVPNRSRNLYKYLQLLQENKDELAKIITLENGKTLTDATGEVQRGIEAVELATSTPNLMMGQALPNIASGIDGSIWRYPIGVVAGITPFNFPMMIPLWMFPLAIACGNTFVLKTSERTPLLAERLVELFYEAGFPKGVLNLVQGGKDVVNSILENKDIQAVSFVGSEPVARYVYETGTKHGKRVQALAGAKNHAIVMPDCNLEKTVQGVIGSAFASSGERCMACSVVAVVDEIADEFIDVLVAETKKLKVGDGFNEDNYVGPLIRESHKERVLGYINSGVADGATLLVDGRKINEEVGEGYFVGATIFDGVNQEMKIWQDEIFAPVLSIVRVKDLEEGIKLTNQSKFANGAVIYTSNGKHAQTFRDNIDAGMIGVNVNVPAPMAFFAFAGNKASFFGDLGTNGTDGVQFYTRKKVVTERWF.

Positions 154, 178, 181, 182, and 231 each coordinate NAD(+). The Nucleophile role is filled by Cys286. Glu386 serves as a coordination point for NAD(+).

It belongs to the aldehyde dehydrogenase family. IolA subfamily. As to quaternary structure, homotetramer.

It carries out the reaction 3-oxopropanoate + NAD(+) + CoA + H2O = hydrogencarbonate + acetyl-CoA + NADH + H(+). It catalyses the reaction 2-methyl-3-oxopropanoate + NAD(+) + CoA + H2O = propanoyl-CoA + hydrogencarbonate + NADH + H(+). It participates in polyol metabolism; myo-inositol degradation into acetyl-CoA; acetyl-CoA from myo-inositol: step 7/7. Functionally, catalyzes the oxidation of malonate semialdehyde (MSA) and methylmalonate semialdehyde (MMSA) into acetyl-CoA and propanoyl-CoA, respectively. Is involved in a myo-inositol catabolic pathway. Bicarbonate, and not CO2, is the end-product of the enzymatic reaction. This is Malonate-semialdehyde dehydrogenase from Bacillus cereus (strain B4264).